A 982-amino-acid polypeptide reads, in one-letter code: Mitochondrial DNA mismatch repair protein mutS homolog (982 aa).

698 to 705 (SVNGAGKS) serves as a coordination point for ATP. An HNH domain is found at 905 to 951 (CEICGAPADAVHHIKPKSEHKKLCNRKLNRRSNLVPVCSSCHLDIHR).

The protein belongs to the DNA mismatch repair MutS family.

It localises to the mitochondrion. Functionally, may be involved in DNA-mismatch repair. The protein is Mitochondrial DNA mismatch repair protein mutS homolog of Sarcophyton glaucum (Toadstool umbrella leather coral).